The sequence spans 377 residues: Benzylmalonyl-CoA dehydrogenase (377 aa).

Residues 123–132 (ICMTEPNAGS), 156–158 (WIT), Arg266, Gln277, and 363–365 (TSE) contribute to the FAD site.

Belongs to the acyl-CoA dehydrogenase family. As to quaternary structure, homotetramer. FAD serves as cofactor.

The catalysed reaction is (2-aminobenzyl)malonyl-CoA + O2 + H(+) = (E)-2-aminocinnamoyl-CoA + H2O2 + CO2. It catalyses the reaction benzylmalonyl-CoA + O2 + H(+) = (E)-cinnamoyl-CoA + H2O2 + CO2. In terms of biological role, involved in degradation of indoleacetate, the most common member of the auxin class of plant hormones. Catalyzes the irreversible oxidative decarboxylation of (2-aminobenzyl)malonyl-CoA to 2-aminocinnamoyl-CoA and CO(2). In vitro, shows high catalytic efficiency with benzylmalonyl-CoA, a chemical analog of the physiological substrate, but otherwise accepts only a few medium-chain alkylmalonyl-CoA compounds as alternative substrates with low activities. The chain is Benzylmalonyl-CoA dehydrogenase from Aromatoleum aromaticum (strain DSM 19018 / LMG 30748 / EbN1) (Azoarcus sp. (strain EbN1)).